Consider the following 1035-residue polypeptide: Cell-division control histidine kinase PdhS (1035 aa).

Residues M1 to D613 form an important for polar localization region. Residues Q500–E533 are disordered. Residues A614–D1035 form an interaction with DivK region. One can recognise a PAS domain in the interval H659–V730. Positions R802–R1031 constitute a Histidine kinase domain. The residue at position 805 (H805) is a Phosphohistidine; by autocatalysis.

Interacts with DivK.

It is found in the cytoplasm. The catalysed reaction is ATP + protein L-histidine = ADP + protein N-phospho-L-histidine.. Functionally, functions as a polar differentiation marker. Essential protein that, by localizing in the old pole of dividing cells, controls cell division and maturation, probably through control of DivK phosphorylation status and cellular distribution, which in turn regulates CtrA, a transcriptional regulator of the minB operon. The asymmetrical localization of this protein is probably required for cells to enter a new division cycle. In Brucella suis biovar 1 (strain 1330), this protein is Cell-division control histidine kinase PdhS (pdhS).